Consider the following 374-residue polypeptide: Erythronate-4-phosphate dehydrogenase (374 aa).

Residues S53 and T75 each contribute to the substrate site. D160 is a binding site for NAD(+). R222 is a catalytic residue. D246 serves as a coordination point for NAD(+). E251 is an active-site residue. The Proton donor role is filled by H268. G271 contacts NAD(+). Y272 contributes to the substrate binding site.

Belongs to the D-isomer specific 2-hydroxyacid dehydrogenase family. PdxB subfamily. In terms of assembly, homodimer.

It is found in the cytoplasm. The enzyme catalyses 4-phospho-D-erythronate + NAD(+) = (R)-3-hydroxy-2-oxo-4-phosphooxybutanoate + NADH + H(+). Its pathway is cofactor biosynthesis; pyridoxine 5'-phosphate biosynthesis; pyridoxine 5'-phosphate from D-erythrose 4-phosphate: step 2/5. Functionally, catalyzes the oxidation of erythronate-4-phosphate to 3-hydroxy-2-oxo-4-phosphonooxybutanoate. This is Erythronate-4-phosphate dehydrogenase from Psychrobacter sp. (strain PRwf-1).